The following is a 479-amino-acid chain: tRNA-2-methylthio-N(6)-dimethylallyladenosine synthase (479 aa).

The MTTase N-terminal domain occupies 3-120 (KKLYIKTWGC…LPEMVNQVSE (118 aa)). Positions 12, 49, 83, 157, 161, and 164 each coordinate [4Fe-4S] cluster. One can recognise a Radical SAM core domain in the interval 143–375 (KADGASAFVS…QQRLNQQSMA (233 aa)). The TRAM domain occupies 378–441 (RRMLETEQRI…PNSLRGELIR (64 aa)).

Belongs to the methylthiotransferase family. MiaB subfamily. Monomer. [4Fe-4S] cluster serves as cofactor.

The protein localises to the cytoplasm. It carries out the reaction N(6)-dimethylallyladenosine(37) in tRNA + (sulfur carrier)-SH + AH2 + 2 S-adenosyl-L-methionine = 2-methylsulfanyl-N(6)-dimethylallyladenosine(37) in tRNA + (sulfur carrier)-H + 5'-deoxyadenosine + L-methionine + A + S-adenosyl-L-homocysteine + 2 H(+). Catalyzes the methylthiolation of N6-(dimethylallyl)adenosine (i(6)A), leading to the formation of 2-methylthio-N6-(dimethylallyl)adenosine (ms(2)i(6)A) at position 37 in tRNAs that read codons beginning with uridine. The protein is tRNA-2-methylthio-N(6)-dimethylallyladenosine synthase of Idiomarina loihiensis (strain ATCC BAA-735 / DSM 15497 / L2-TR).